Consider the following 172-residue polypeptide: Ribosome maturation factor RimM (172 aa).

Residues 100 to 172 enclose the PRC barrel domain; sequence PGEYYRVDLV…RIVVDWDPGF (73 aa).

This sequence belongs to the RimM family. As to quaternary structure, binds ribosomal protein uS19.

The protein resides in the cytoplasm. Its function is as follows. An accessory protein needed during the final step in the assembly of 30S ribosomal subunit, possibly for assembly of the head region. Essential for efficient processing of 16S rRNA. May be needed both before and after RbfA during the maturation of 16S rRNA. It has affinity for free ribosomal 30S subunits but not for 70S ribosomes. This chain is Ribosome maturation factor RimM, found in Methylococcus capsulatus (strain ATCC 33009 / NCIMB 11132 / Bath).